Reading from the N-terminus, the 510-residue chain is NAD(P)H-quinone oxidoreductase subunit 2 A, chloroplastic (510 aa).

Helical transmembrane passes span 31–51 (FIFP…IDLT), 59–79 (WFYF…LFRW), 99–119 (IFQF…VEYI), 124–144 (MAIT…MFLC), 149–169 (LITI…LSGY), 184–204 (LLMG…LYGL), 229–249 (ISIA…LAPF), 261–281 (PTPV…ALAT), 295–315 (WHLL…LLAI), 323–343 (MLAY…IVGD), 354–374 (YMLF…LFGL), 395–415 (ALSL…AGFF), 418–438 (LYLF…IGLL), and 484–504 (MTVC…ILAI).

It belongs to the complex I subunit 2 family. NDH is composed of at least 16 different subunits, 5 of which are encoded in the nucleus.

Its subcellular location is the plastid. The protein localises to the chloroplast thylakoid membrane. It carries out the reaction a plastoquinone + NADH + (n+1) H(+)(in) = a plastoquinol + NAD(+) + n H(+)(out). The catalysed reaction is a plastoquinone + NADPH + (n+1) H(+)(in) = a plastoquinol + NADP(+) + n H(+)(out). NDH shuttles electrons from NAD(P)H:plastoquinone, via FMN and iron-sulfur (Fe-S) centers, to quinones in the photosynthetic chain and possibly in a chloroplast respiratory chain. The immediate electron acceptor for the enzyme in this species is believed to be plastoquinone. Couples the redox reaction to proton translocation, and thus conserves the redox energy in a proton gradient. The sequence is that of NAD(P)H-quinone oxidoreductase subunit 2 A, chloroplastic from Oryza sativa subsp. japonica (Rice).